Here is a 538-residue protein sequence, read N- to C-terminus: Chaperonin GroEL (538 aa).

Residues 29-32 (TLGP), 86-90 (DGTTT), Gly413, 479-481 (DAL), and Asp495 each bind ATP.

Belongs to the chaperonin (HSP60) family. In terms of assembly, forms a cylinder of 14 subunits composed of two heptameric rings stacked back-to-back. Interacts with the co-chaperonin GroES.

The protein resides in the cytoplasm. It catalyses the reaction ATP + H2O + a folded polypeptide = ADP + phosphate + an unfolded polypeptide.. In terms of biological role, together with its co-chaperonin GroES, plays an essential role in assisting protein folding. The GroEL-GroES system forms a nano-cage that allows encapsulation of the non-native substrate proteins and provides a physical environment optimized to promote and accelerate protein folding. In Thermotoga neapolitana, this protein is Chaperonin GroEL.